The following is a 510-amino-acid chain: Serine carboxypeptidase 1 (510 aa).

The N-terminal stretch at 1 to 25 (MARRGRRSLASPAVAIALFVFLAYG) is a signal peptide. The propeptide occupies 26–36 (GGGGGGGVCEA). 3 disulfides stabilise this stretch: cysteine 98/cysteine 399, cysteine 262/cysteine 274, and cysteine 297/cysteine 366. Residue asparagine 154 is glycosylated (N-linked (GlcNAc...) asparagine). Serine 194 is a catalytic residue. The N-linked (GlcNAc...) asparagine glycan is linked to asparagine 268. Residues 303–362 (IKKVTPANTKLPKSFQHLGTTTKPLAVRTRMHGRAWPLRAPVRAGRVPSWQEFARGSRPS) constitute a propeptide, linker peptide. N-linked (GlcNAc...) asparagine glycosylation occurs at asparagine 418. Active-site residues include aspartate 434 and histidine 487. The Microbody targeting signal signature appears at 508-510 (SKL).

It belongs to the peptidase S10 family.

It catalyses the reaction Release of a C-terminal amino acid with broad specificity.. This is Serine carboxypeptidase 1 (CBP1) from Oryza sativa subsp. japonica (Rice).